Here is a 203-residue protein sequence, read N- to C-terminus: UPF0637 protein Sca_0732 (203 aa).

This sequence belongs to the UPF0637 family.

The sequence is that of UPF0637 protein Sca_0732 from Staphylococcus carnosus (strain TM300).